We begin with the raw amino-acid sequence, 1020 residues long: LLGL scribble cell polarity complex component 2 (1020 aa).

14 WD repeats span residues 36–69 (SALG…FMGL), 76–117 (VTQI…DESF), 132–169 (ITVV…DRTI), 193–227 (ALQE…LYHF), 233–268 (LENI…QPEP), 282–324 (AITR…GQQT), 332–366 (VIGF…VIDL), 388–464 (TCSH…YKLS), 508–583 (QKIF…FVLV), 592–653 (TSLA…LRQS), 713–769 (VRTL…KEIQ), 778–830 (GILV…VSAK), 835–888 (LTAL…VRYS), and 902–925 (VFTK…SLST). The residue at position 653 (Ser653) is a Phosphoserine. A compositionally biased stretch (basic residues) spans 653 to 669 (SFRRMRRSRVSSRKRHP). The tract at residues 653–689 (SFRRMRRSRVSSRKRHPAGPPGEAQEGSAKAERPGLQ) is disordered. Disordered regions lie at residues 938-975 (AETK…PGLV) and 992-1020 (STLE…GGAE). Phosphoserine is present on residues Ser965 and Ser1015.

The protein belongs to the WD repeat L(2)GL family. In terms of assembly, interacts with GPSM2/LGN, PRKCI/aPKC and PARD6B/Par-6. The complex is enhanced during mitosis. Interacts with DCAF1. Post-translationally, phosphorylated at Ser-653 by PRKCI. Phosphorylation is enhanced during cell polarization induced by calcium. Phosphorylation may occur during the cell-cell contact-induced cell polarization and may contribute to the segregation of LLGL2 from the PRKCI/aPKC and PARD6B/Par-6 complex.

The protein localises to the cytoplasm. Part of a complex with GPSM2/LGN, PRKCI/aPKC and PARD6B/Par-6, which may ensure the correct organization and orientation of bipolar spindles for normal cell division. This complex plays roles in the initial phase of the establishment of epithelial cell polarity. The sequence is that of LLGL scribble cell polarity complex component 2 (LLGL2) from Homo sapiens (Human).